Reading from the N-terminus, the 88-residue chain is UPF0213 protein SAG0778 (88 aa).

The 77-residue stretch at 4–80 folds into the GIY-YIG domain; sequence VPAYMYVLEC…QKTRQAKLTY (77 aa).

Belongs to the UPF0213 family.

The chain is UPF0213 protein SAG0778 from Streptococcus agalactiae serotype V (strain ATCC BAA-611 / 2603 V/R).